Reading from the N-terminus, the 184-residue chain is Ribosome-recycling factor (184 aa).

Belongs to the RRF family.

It is found in the cytoplasm. Its function is as follows. Responsible for the release of ribosomes from messenger RNA at the termination of protein biosynthesis. May increase the efficiency of translation by recycling ribosomes from one round of translation to another. In Thermoanaerobacter pseudethanolicus (strain ATCC 33223 / 39E) (Clostridium thermohydrosulfuricum), this protein is Ribosome-recycling factor.